The primary structure comprises 354 residues: Phenylalanine 4-monooxygenase, chloroplastic (354 aa).

Residues methionine 1–arginine 60 constitute a chloroplast transit peptide. Fe cation is bound by residues histidine 229, histidine 234, and glutamate 274.

It belongs to the biopterin-dependent aromatic amino acid hydroxylase family. In terms of assembly, forms monomers. Fe(2+) is required as a cofactor.

It is found in the plastid. The protein resides in the chloroplast. It catalyses the reaction (6R)-L-erythro-5,6,7,8-tetrahydrobiopterin + L-phenylalanine + O2 = (4aS,6R)-4a-hydroxy-L-erythro-5,6,7,8-tetrahydrobiopterin + L-tyrosine. Its function is as follows. Catalyzes the hydroxylation of L-phenylalanine to L-tyrosine. Does not seem to be tetrahydropterin-dependent and shows preference for 10-formyltetrahydrofolate as cosubstrate and electron donor. This Pinus taeda (Loblolly pine) protein is Phenylalanine 4-monooxygenase, chloroplastic.